Here is a 159-residue protein sequence, read N- to C-terminus: Protein Smg homolog (159 aa).

Belongs to the Smg family.

This Nitrosococcus oceani (strain ATCC 19707 / BCRC 17464 / JCM 30415 / NCIMB 11848 / C-107) protein is Protein Smg homolog.